Consider the following 63-residue polypeptide: MARVCEVCAKGKVSGNVVSHSNRHNRRTWEPNLRRVRAIVNGTAKRINVCTRCLRSGRVERAL.

This sequence belongs to the bacterial ribosomal protein bL28 family.

This Alkaliphilus oremlandii (strain OhILAs) (Clostridium oremlandii (strain OhILAs)) protein is Large ribosomal subunit protein bL28.